Consider the following 148-residue polypeptide: Probable transcriptional regulator SyrB (148 aa).

The segment at 1–58 (MADESNTGPVAAAEAVAETQAPAGKRKSSSRRQRTAAGQVAESKTTAKPKRYSETERA) is disordered. The segment covering 7–23 (TGPVAAAEAVAETQAPA) has biased composition (low complexity). Residues 24 to 34 (GKRKSSSRRQR) show a composition bias toward basic residues.

Belongs to the SyrB family.

Responsible for the repression of SyrM activity. This Sinorhizobium fredii (strain NBRC 101917 / NGR234) protein is Probable transcriptional regulator SyrB (syrB).